The chain runs to 671 residues: tRNA(Met) cytidine acetyltransferase TmcA (671 aa).

ATP contacts are provided by residues glutamine 180, 202-211 (GRGKSALAGQ), and arginine 319. The N-acetyltransferase domain occupies 356 to 531 (QTLWQSDPET…SGCYTAMALL (176 aa)). Residues 461–463 (IAV), 468–474 (QREGTGR), glutamate 499, and arginine 506 contribute to the acetyl-CoA site.

Belongs to the RNA cytidine acetyltransferase family. TmcA subfamily.

Its subcellular location is the cytoplasm. It carries out the reaction cytidine(34) in elongator tRNA(Met) + acetyl-CoA + ATP + H2O = N(4)-acetylcytidine(34) in elongator tRNA(Met) + ADP + phosphate + CoA + H(+). It catalyses the reaction 2-hydroxyisobutanoyl-CoA + L-lysyl-[protein] = N(6)-(2-hydroxyisobutanoyl)-L-lysyl-[protein] + CoA + H(+). With respect to regulation, ATP/GTP hydrolysis is stimulated by the addition of acetyl-CoA and tRNA(Met). Binding of acetyl-CoA to TmcA activates both ATPase and tRNA-binding activities. ATP promotes the 2-hydroxyisobutyryltransferase activity. Catalyzes the formation of N(4)-acetylcytidine (ac(4)C) at the wobble position of tRNA(Met), by using acetyl-CoA as an acetyl donor and ATP (or GTP). It recognizes the wobble base of tRNA(Met), thus distinguishing between tRNA(Met) and the structurally similar tRNA(Ile2). Could use an RNA helicase motor driven by ATP hydrolysis to deliver the wobble base of tRNA(Met) to the acetyltransferase domain of TmcA. Functionally, also functions as a lysine 2-hydroxyisobutyryltransferase to regulate transcription. Can specifically catalyze the 2-hydroxyisobutyrylation (Khib) of the DNA-binding protein H-NS. Hydroxyisobutyrylation of H-NS decreases its DNA-binding activity, promotes the expression of acid-resistance genes and enhances bacterial survival under extreme acid stress. This Escherichia coli (strain K12) protein is tRNA(Met) cytidine acetyltransferase TmcA.